Reading from the N-terminus, the 197-residue chain is NADH-quinone oxidoreductase subunit C (197 aa).

It belongs to the complex I 30 kDa subunit family. In terms of assembly, NDH-1 is composed of 14 different subunits. Subunits NuoB, C, D, E, F, and G constitute the peripheral sector of the complex.

It is found in the cell inner membrane. The catalysed reaction is a quinone + NADH + 5 H(+)(in) = a quinol + NAD(+) + 4 H(+)(out). Its function is as follows. NDH-1 shuttles electrons from NADH, via FMN and iron-sulfur (Fe-S) centers, to quinones in the respiratory chain. The immediate electron acceptor for the enzyme in this species is believed to be ubiquinone. Couples the redox reaction to proton translocation (for every two electrons transferred, four hydrogen ions are translocated across the cytoplasmic membrane), and thus conserves the redox energy in a proton gradient. This Rickettsia typhi (strain ATCC VR-144 / Wilmington) protein is NADH-quinone oxidoreductase subunit C.